A 156-amino-acid chain; its full sequence is Endoribonuclease YbeY (156 aa).

Positions 117, 121, and 127 each coordinate Zn(2+).

The protein belongs to the endoribonuclease YbeY family. Requires Zn(2+) as cofactor.

It is found in the cytoplasm. Functionally, single strand-specific metallo-endoribonuclease involved in late-stage 70S ribosome quality control and in maturation of the 3' terminus of the 16S rRNA. This chain is Endoribonuclease YbeY, found in Herminiimonas arsenicoxydans.